The sequence spans 232 residues: Ubiquinone biosynthesis O-methyltransferase (232 aa).

Residues R36, G55, D76, and L120 each coordinate S-adenosyl-L-methionine.

It belongs to the methyltransferase superfamily. UbiG/COQ3 family.

It catalyses the reaction a 3-demethylubiquinol + S-adenosyl-L-methionine = a ubiquinol + S-adenosyl-L-homocysteine + H(+). The catalysed reaction is a 3-(all-trans-polyprenyl)benzene-1,2-diol + S-adenosyl-L-methionine = a 2-methoxy-6-(all-trans-polyprenyl)phenol + S-adenosyl-L-homocysteine + H(+). It functions in the pathway cofactor biosynthesis; ubiquinone biosynthesis. Its function is as follows. O-methyltransferase that catalyzes the 2 O-methylation steps in the ubiquinone biosynthetic pathway. In Pseudomonas fluorescens (strain Pf0-1), this protein is Ubiquinone biosynthesis O-methyltransferase.